The sequence spans 387 residues: Alanine racemase (387 aa).

K38 acts as the Proton acceptor; specific for D-alanine in catalysis. Position 38 is an N6-(pyridoxal phosphate)lysine (K38). R136 serves as a coordination point for substrate. The active-site Proton acceptor; specific for L-alanine is the Y267. A substrate-binding site is contributed by M316.

Belongs to the alanine racemase family. Requires pyridoxal 5'-phosphate as cofactor.

It carries out the reaction L-alanine = D-alanine. It participates in amino-acid biosynthesis; D-alanine biosynthesis; D-alanine from L-alanine: step 1/1. Functionally, catalyzes the interconversion of L-alanine and D-alanine. May also act on other amino acids. In Clostridium tetani (strain Massachusetts / E88), this protein is Alanine racemase (alr).